The following is an 845-amino-acid chain: Disintegrin and metalloproteinase domain-containing protein 9 (845 aa).

The signal sequence occupies residues 1–29; that stretch reads MGPRALSPLASLRLRWLLACGLLGPVLEA. Residues 30–697 lie on the Extracellular side of the membrane; it reads GRPDLEQTVH…YNAKSTALRD (668 aa). N-linked (GlcNAc...) asparagine glycans are attached at residues asparagine 144, asparagine 154, and asparagine 231. The 195-residue stretch at 212 to 406 folds into the Peptidase M12B domain; the sequence is RYVELFIVVD…KGGSCLLNIP (195 aa). Disulfide bonds link cysteine 322-cysteine 401, cysteine 363-cysteine 385, cysteine 365-cysteine 370, and cysteine 473-cysteine 493. Histidine 347 is a binding site for Zn(2+). Residue glutamate 348 is part of the active site. Positions 351 and 357 each coordinate Zn(2+). Residues asparagine 381, asparagine 487, and asparagine 636 are each glycosylated (N-linked (GlcNAc...) asparagine). Residues 414 to 501 enclose the Disintegrin domain; it reads APSCGNKLVD…FCPPDVFIQN (88 aa). Intrachain disulfides connect cysteine 644–cysteine 656, cysteine 650–cysteine 662, and cysteine 664–cysteine 673. The EGF-like domain occupies 644–698; sequence CDIQGKCHGHGVCNSNKNCHCEDGWAPPHCDTKGYGGSVDSGPTYNAKSTALRDG. A helical membrane pass occupies residues 698–718; the sequence is GLLVFFFLIVPLVAAAIFLFI. Residues 719–845 are Cytoplasmic-facing; that stretch reads KRDELRKTFR…PAPPLYSSLT (127 aa). The interval 729–845 is disordered; it reads KKRSQMSDGR…PAPPLYSSLT (117 aa). The segment covering 734–745 has biased composition (polar residues); it reads MSDGRNQANVSR. Residues 783 to 794 are compositionally biased toward pro residues; the sequence is PGGPGVSRPPPG.

As to quaternary structure, interacts with SH3GL2 and SNX9 through its cytoplasmic tail. Interacts with ITGA6. Zn(2+) is required as a cofactor. In terms of processing, proteolytically cleaved in the trans-Golgi network before it reaches the plasma membrane to generate a mature protein. The removal of the pro-domain occurs via cleavage at two different sites. Processed most likely by a pro-protein convertase such as furin, at the boundary between the pro-domain and the catalytic domain. An additional upstream cleavage pro-protein convertase site (Arg-56/Glu-57) has an important role in the activation of ADAM9. Phosphorylation is induced in vitro by phorbol-12-myristate-13-acetate (PMA).

The protein resides in the cell membrane. Synthesized as an inactive form which is proteolytically cleaved to generate an active enzyme. Processing at the upstream site is particularly important for activation of the proenzyme, whereas processing at the boundary between the pro-domain and the catalytic domain does not appear to be essential. Inhibited by hydroxamic acid-based inhibitors. Metalloprotease that cleaves and releases a number of molecules with important roles in tumorigenesis and angiogenesis, such as TEK, KDR, EPHB4, CD40, VCAM1 and CDH5. May mediate cell-cell, cell-matrix interactions and regulate the motility of cells via interactions with integrins. In Mus musculus (Mouse), this protein is Disintegrin and metalloproteinase domain-containing protein 9.